A 374-amino-acid chain; its full sequence is Anhydro-N-acetylmuramic acid kinase (374 aa).

12–19 contributes to the ATP binding site; sequence GTSLDGVD.

It belongs to the anhydro-N-acetylmuramic acid kinase family.

It carries out the reaction 1,6-anhydro-N-acetyl-beta-muramate + ATP + H2O = N-acetyl-D-muramate 6-phosphate + ADP + H(+). It participates in amino-sugar metabolism; 1,6-anhydro-N-acetylmuramate degradation. Its pathway is cell wall biogenesis; peptidoglycan recycling. In terms of biological role, catalyzes the specific phosphorylation of 1,6-anhydro-N-acetylmuramic acid (anhMurNAc) with the simultaneous cleavage of the 1,6-anhydro ring, generating MurNAc-6-P. Is required for the utilization of anhMurNAc either imported from the medium or derived from its own cell wall murein, and thus plays a role in cell wall recycling. The sequence is that of Anhydro-N-acetylmuramic acid kinase from Escherichia fergusonii (strain ATCC 35469 / DSM 13698 / CCUG 18766 / IAM 14443 / JCM 21226 / LMG 7866 / NBRC 102419 / NCTC 12128 / CDC 0568-73).